Here is a 435-residue protein sequence, read N- to C-terminus: UPF0597 protein ASA_0240 (435 aa).

It belongs to the UPF0597 family.

This is UPF0597 protein ASA_0240 from Aeromonas salmonicida (strain A449).